Reading from the N-terminus, the 422-residue chain is Fasciclin-like arabinogalactan protein 10 (422 aa).

Positions 1-25 (MATSRAFTLFAFTLSLLTVASTVSG) are cleaved as a signal peptide. 2 FAS1 domains span residues 26-172 (HNIT…NAPI) and 187-327 (GVSN…DNVL). N-linked (GlcNAc...) asparagine glycosylation is found at asparagine 27, asparagine 128, asparagine 162, asparagine 190, and asparagine 244. The interval 336–397 (SSSPAPAPEP…PTSSENSNAK (62 aa)) is disordered. The segment covering 340 to 374 (APAPEPVSAPTPTPAKSPSPVEAPSPTAASPPAPP) has biased composition (pro residues). Residues 386–397 (DSPTSSENSNAK) are compositionally biased toward polar residues. Asparagine 398 carries the GPI-anchor amidated asparagine lipid modification. Residues 399-422 (AAFHVNAPALFTALVTIAATSLLL) constitute a propeptide, removed in mature form.

This sequence belongs to the fasciclin-like AGP family.

Its subcellular location is the cell membrane. Functionally, may be a cell surface adhesion protein. The polypeptide is Fasciclin-like arabinogalactan protein 10 (FLA10) (Arabidopsis thaliana (Mouse-ear cress)).